Consider the following 141-residue polypeptide: Large ribosomal subunit protein uL14 (141 aa).

Belongs to the universal ribosomal protein uL14 family. As to quaternary structure, part of the 50S ribosomal subunit. Forms a cluster with proteins L3 and L24e, part of which may contact the 16S rRNA in 2 intersubunit bridges.

Binds to 23S rRNA. Forms part of two intersubunit bridges in the 70S ribosome. This chain is Large ribosomal subunit protein uL14, found in Pyrococcus furiosus (strain ATCC 43587 / DSM 3638 / JCM 8422 / Vc1).